Reading from the N-terminus, the 277-residue chain is Indole-3-glycerol phosphate synthase (277 aa).

This sequence belongs to the TrpC family.

It catalyses the reaction 1-(2-carboxyphenylamino)-1-deoxy-D-ribulose 5-phosphate + H(+) = (1S,2R)-1-C-(indol-3-yl)glycerol 3-phosphate + CO2 + H2O. The protein operates within amino-acid biosynthesis; L-tryptophan biosynthesis; L-tryptophan from chorismate: step 4/5. The polypeptide is Indole-3-glycerol phosphate synthase (Pseudomonas putida (strain W619)).